We begin with the raw amino-acid sequence, 277 residues long: Co-chaperone protein DjlA (277 aa).

At 1-4 (MWGK) the chain is on the periplasmic side. The chain crosses the membrane as a helical span at residues 5–28 (ILGAFFGFLLGGPFGLLLGLFLGH). The Cytoplasmic segment spans residues 29-277 (KFDKARRNVY…DMIRKEKGFK (249 aa)). The 67-residue stretch at 211–277 (DAYEVLGVTE…DMIRKEKGFK (67 aa)) folds into the J domain.

As to quaternary structure, homodimer.

It is found in the cell inner membrane. Functionally, regulatory DnaK co-chaperone. Direct interaction between DnaK and DjlA is needed for the induction of the wcaABCDE operon, involved in the synthesis of a colanic acid polysaccharide capsule, possibly through activation of the RcsB/RcsC phosphotransfer signaling pathway. The colanic acid capsule may help the bacterium survive conditions outside the host. The chain is Co-chaperone protein DjlA from Photobacterium profundum (strain SS9).